The primary structure comprises 790 residues: LPS-assembly protein LptD (790 aa).

Residues 1 to 20 form the signal peptide; that stretch reads MRMLRWLILSAFSVAGAVQA.

This sequence belongs to the LptD family. As to quaternary structure, component of the lipopolysaccharide transport and assembly complex. Interacts with LptE and LptA.

The protein resides in the cell outer membrane. In terms of biological role, together with LptE, is involved in the assembly of lipopolysaccharide (LPS) at the surface of the outer membrane. The sequence is that of LPS-assembly protein LptD from Bordetella bronchiseptica (strain ATCC BAA-588 / NCTC 13252 / RB50) (Alcaligenes bronchisepticus).